The primary structure comprises 517 residues: FAD-dependent monooxygenase FUP4 (517 aa).

The signal sequence occupies residues 1–19 (MRQSSTLTWTSVLLAPLAA). Residues 75 to 246 (QALRPACLVH…TRFDLDLYDQ (172 aa)) form the FAD-binding PCMH-type domain. H112 carries the pros-8alpha-FAD histidine modification. N-linked (GlcNAc...) asparagine glycans are attached at residues N163, N208, and N346.

This sequence belongs to the oxygen-dependent FAD-linked oxidoreductase family. It depends on FAD as a cofactor.

It participates in secondary metabolite biosynthesis; terpenoid biosynthesis. In terms of biological role, FAD-dependent monooxygenase; part of the gene cluster that mediates the biosynthesis of the mycotoxin fusaproliferin (FUP) that belongs to the class of bicyclic sesterterpenoids. FUP4 catalyzes the oxidation of the hydroxy group at the C-16 position of preterpestacin III to a keto group, leading to the formation of (-)-terpestacin. The product of FUP1, preterpestacin I, might also serve as a substrate of FUP4 to yield oxo-preterpestacin I. The FUP biosynthetic pathway starts with the enzyme encoded by FUP1 that combines a C-terminal prenyltransferase domain responsible for the synthesis of geranylgeranyl diphosphate with the N-terminal terpene cyclase domain, to yield preterpestacin I. Preterpestacin I is then decorated by oxygenation steps that are catalyzed by two cytochrome P450 monooxygenases. First, FUP2 introduces a hydroxyl group at the C-24 position resulting in the formation of preterpestacin IIa. The second P450 monooxygenase catalyzes the hydroxylation at C-16 and C-17 of preterpestacin IIa, producing preterpestacin III. Subsequently, the FAD-dependent oxidoreductase FUP4 catalyzes the oxidation of the hydroxy group at the C-16 position to a keto group, leading to the formation of (-)-terpestacin, which is the immediate precursor of FUP. The final step in the proposed biosynthetic pathway is the addition of an acetyl group at the C-24 position of terpestacin, which is catalyzed by the acetyltransferase FUP5. The sequence is that of FAD-dependent monooxygenase FUP4 from Fusarium proliferatum (strain ET1) (Orchid endophyte fungus).